Reading from the N-terminus, the 239-residue chain is Probable transcriptional regulatory protein Aave_3203 (239 aa).

The interval 1–20 (MAGHSKWANIQHRKGRQDEK) is disordered.

It belongs to the TACO1 family.

Its subcellular location is the cytoplasm. This chain is Probable transcriptional regulatory protein Aave_3203, found in Paracidovorax citrulli (strain AAC00-1) (Acidovorax citrulli).